Reading from the N-terminus, the 184-residue chain is Ras-related protein Rap-1b (184 aa).

10–17 (GSGGVGKS) is a GTP binding site. The short motif at 32–40 (YDPTIEDSY) is the Effector region element. Residues 57–61 (DTAGT) and 116–119 (NKCD) contribute to the GTP site. Position 181 is a cysteine methyl ester (Cys-181). A lipid anchor (S-geranylgeranyl cysteine) is attached at Cys-181. The propeptide at 182-184 (HLL) is removed in mature form.

The protein belongs to the small GTPase superfamily. Ras family.

It is found in the cell membrane. Its subcellular location is the cytoplasm. The protein localises to the cytosol. The protein resides in the cell junction. It catalyses the reaction GTP + H2O = GDP + phosphate + H(+). Functionally, probable GTP-binding protein that possesses GTPase activity. May play a role in endothelial cell polarity and endothelial barrier function. The chain is Ras-related protein Rap-1b (rap1b) from Xenopus laevis (African clawed frog).